Here is a 779-residue protein sequence, read N- to C-terminus: Serine/threonine-protein kinase SIK1 (779 aa).

A Protein kinase domain is found at 27–278 (YDVERTLGKG…IAQIRQHRWM (252 aa)). ATP-binding positions include 33–41 (LGKGNFAVV) and Lys56. Asp149 serves as the catalytic Proton acceptor. Thr182 is modified (phosphothreonine; by LKB1 and GSK3-beta). Ser186 is modified (phosphoserine; by autocatalysis). The region spanning 303-343 (DYNEQVLGIMQALGIDRQRTIESLQNSSYNHFAAIYYLLLE) is the UBA domain. Thr322 bears the Phosphothreonine; by CaMK1 mark. Disordered regions lie at residues 350–375 (SAQPSSRPTPAPTRQPQLRSSDLSSL) and 449–472 (EARQGPSLEEEQEVQEPLPGSTGR). Residues 363–373 (RQPQLRSSDLS) show a composition bias toward polar residues. Ser577 carries the phosphoserine; by PKA modification. The interval 586-612 (KAFRQQLRKNARTKGFLGLNKIKGLAR) is RK-rich region. Positions 621–641 (TPRGGMSTFHTPAPSSGLQGC) are disordered. The span at 628–641 (TFHTPAPSSGLQGC) shows a compositional bias: polar residues.

The protein belongs to the protein kinase superfamily. CAMK Ser/Thr protein kinase family. AMPK subfamily. Interacts (when phosphorylated on Thr-182 and Ser-186) with YWHAZ. Interacts with ATP1A1. Mg(2+) serves as cofactor. Post-translationally, phosphorylated at Thr-182 by STK11/LKB1 in complex with STE20-related adapter-alpha (STRADA) pseudo kinase and CAB39, leading to its activation. Phosphorylation at Thr-182 promotes autophosphorylation at Ser-186, which is required for sustained activity. Autophosphorylation at Ser-186 is maintained by sequential phosphorylation at Thr-182 by GSK3-beta. GSK3-beta cannot initiate phosphorylation at Thr-182, it can only maintain it. Phosphorylation at Ser-577 by PKA promotes translocation to the cytoplasm. Phosphorylation at Thr-322 by CaMK1 following intracellular sodium concentration leads to activation. In terms of tissue distribution, expressed in lung, skin, ovary, heart and stomach. No expression in brain, liver or adult skeletal muscle but is present in skeletal muscle progenitor cells of the somite beginning at 9.5 dpc. Present at 8.0 dpc in the monolayer of presumptive myocardial cells but rapidly down-regulated at 8.5 dpc upon primitive ventricle formation, although still present in myocardial cells that will populate the primitive atrium and bulbus cordis. At 9.5 dpc expression is down-regulated in the primitive atrium but observed in the sinus venosus and truncus arteriosus.

Its subcellular location is the cytoplasm. The protein localises to the nucleus. It catalyses the reaction L-seryl-[protein] + ATP = O-phospho-L-seryl-[protein] + ADP + H(+). The catalysed reaction is L-threonyl-[protein] + ATP = O-phospho-L-threonyl-[protein] + ADP + H(+). With respect to regulation, activated by phosphorylation on Thr-182. Also activated by phosphorylation on Thr-322 in response to increases in intracellular sodium in parallel with elevations in intracellular calcium through the reversible sodium/calcium exchanger. Its function is as follows. Serine/threonine-protein kinase involved in various processes such as cell cycle regulation, gluconeogenesis and lipogenesis regulation, muscle growth and differentiation and tumor suppression. Phosphorylates HDAC4, HDAC5, PPME1, SREBF1, CRTC1/TORC1 and CRTC2/TORC2. Acts as a tumor suppressor and plays a key role in p53/TP53-dependent anoikis, a type of apoptosis triggered by cell detachment: required for phosphorylation of p53/TP53 in response to loss of adhesion and is able to suppress metastasis. Part of a sodium-sensing signaling network, probably by mediating phosphorylation of PPME1: following increases in intracellular sodium, SIK1 is activated by CaMK1 and phosphorylates PPME1 subunit of protein phosphatase 2A (PP2A), leading to dephosphorylation of sodium/potassium-transporting ATPase ATP1A1 and subsequent increase activity of ATP1A1. Acts as a regulator of muscle cells by phosphorylating and inhibiting class II histone deacetylases HDAC4 and HDAC5, leading to promote expression of MEF2 target genes in myocytes. Also required during cardiomyogenesis by regulating the exit of cardiomyoblasts from the cell cycle via down-regulation of CDKN1C/p57Kip2. Acts as a regulator of hepatic gluconeogenesis by phosphorylating and repressing the CREB-specific coactivators CRTC1/TORC1 and CRTC2/TORC2, leading to inhibit CREB activity. Also regulates hepatic lipogenesis by phosphorylating and inhibiting SREBF1. In concert with CRTC1/TORC1, regulates the light-induced entrainment of the circadian clock by attenuating PER1 induction; represses CREB-mediated transcription of PER1 by phosphorylating and deactivating CRTC1/TORC1. This is Serine/threonine-protein kinase SIK1 (Sik1) from Mus musculus (Mouse).